A 165-amino-acid chain; its full sequence is Shikimate kinase (165 aa).

Residue 11–16 (GAGKTT) participates in ATP binding. A Mg(2+)-binding site is contributed by Thr15. Substrate-binding residues include Asp33, Arg57, and Gly78. ATP is bound at residue Arg116. A substrate-binding site is contributed by Arg134.

Belongs to the shikimate kinase family. As to quaternary structure, monomer. Mg(2+) is required as a cofactor.

The protein localises to the cytoplasm. The catalysed reaction is shikimate + ATP = 3-phosphoshikimate + ADP + H(+). The protein operates within metabolic intermediate biosynthesis; chorismate biosynthesis; chorismate from D-erythrose 4-phosphate and phosphoenolpyruvate: step 5/7. Catalyzes the specific phosphorylation of the 3-hydroxyl group of shikimic acid using ATP as a cosubstrate. This is Shikimate kinase from Bacillus anthracis (strain A0248).